A 432-amino-acid polypeptide reads, in one-letter code: Probable protein phosphatase 2C 75 (432 aa).

In terms of domain architecture, PPM-type phosphatase spans 44–356 (VACLFTRQGK…DDCAVVCLFL (313 aa)). Residues D80, G81, D301, and D347 each contribute to the Mn(2+) site. The tract at residues 372 to 408 (SPRMPALSGITRPNSKRVTPDDVDDGSDSNVSGDERS) is disordered.

It belongs to the PP2C family. Mg(2+) is required as a cofactor. It depends on Mn(2+) as a cofactor.

It catalyses the reaction O-phospho-L-seryl-[protein] + H2O = L-seryl-[protein] + phosphate. The enzyme catalyses O-phospho-L-threonyl-[protein] + H2O = L-threonyl-[protein] + phosphate. This chain is Probable protein phosphatase 2C 75, found in Oryza sativa subsp. japonica (Rice).